The following is a 528-amino-acid chain: Oxamate amidohydrolase proenzyme (528 aa).

The active-site Nucleophile is T342. Position 424 to 425 (424 to 425 (GG)) interacts with substrate.

Belongs to the gamma-glutamyltransferase family. Heterodimer that consists of a 35.5 kDa large (alpha) subunit and a 20 kDa small (beta) subunit, which are synthesized from a single polypeptide. Post-translationally, cleaved by autocatalysis into a large (alpha) and a small (beta) subunit.

It carries out the reaction oxamate + H2O = oxalate + NH4(+). In terms of biological role, involved in the uric acid degradation pathway. Catalyzes the conversion of oxamate to oxalate. The polypeptide is Oxamate amidohydrolase proenzyme (Klebsiella pneumoniae subsp. pneumoniae (strain ATCC 700721 / MGH 78578)).